The chain runs to 90 residues: uncharacterized protein (90 aa).

Residues 15 to 34 form a helical membrane-spanning segment; that stretch reads HVLAISTFIATAAVASYFTT. The interval 34–65 is disordered; the sequence is TKPKTKNEGKNSSALSQQKSGESSNSDAMGKD. Residues 43–60 show a composition bias toward polar residues; the sequence is KNSSALSQQKSGESSNSD. A glycan (N-linked (GlcNAc...) asparagine) is linked at Asn44.

It localises to the mitochondrion membrane. This is an uncharacterized protein from Saccharomyces cerevisiae (strain ATCC 204508 / S288c) (Baker's yeast).